Consider the following 326-residue polypeptide: Interleukin-1-binding protein (326 aa).

The first 18 residues, 1–18, serve as a signal peptide directing secretion; it reads MSILPVIFLSIFFYSSFV. 3 Ig-like domains span residues 24–115, 122–212, and 221–322; these read PECI…LNLT, SNID…RIVK, and PSTM…KTVT. A disulfide bridge connects residues C48 and C99. N-linked (GlcNAc...) asparagine; by host glycosylation is found at N80, N103, and N113. A disulfide bridge connects residues C143 and C194. N-linked (GlcNAc...) asparagine; by host glycans are attached at residues N206 and N237. C242 and C309 are oxidised to a cystine.

The protein belongs to the interleukin-1 receptor family. As to quaternary structure, interacts with mouse Il1b.

Its subcellular location is the secreted. May reduce the host inflammatory response by interacting with inteleukin-1 beta (Il1b) and thus decreasing the association between IL1B and its cellular receptor. This chain is Interleukin-1-binding protein (OPG201), found in Vaccinia virus (strain Ankara) (VACV).